A 319-amino-acid polypeptide reads, in one-letter code: Ribonucleoside-diphosphate reductase 2 subunit beta (319 aa).

3 residues coordinate Fe cation: Asp-67, Glu-98, and His-101. Residue Tyr-105 is part of the active site. Residues Glu-158, Glu-192, and His-195 each contribute to the Fe cation site.

Belongs to the ribonucleoside diphosphate reductase small chain family. As to quaternary structure, tetramer of two alpha and two beta subunits. It depends on Fe cation as a cofactor.

The enzyme catalyses a 2'-deoxyribonucleoside 5'-diphosphate + [thioredoxin]-disulfide + H2O = a ribonucleoside 5'-diphosphate + [thioredoxin]-dithiol. Provides the precursors necessary for DNA synthesis. Catalyzes the biosynthesis of deoxyribonucleotides from the corresponding ribonucleotides. R2F contains the tyrosyl radical required for catalysis. This Salmonella typhimurium (strain LT2 / SGSC1412 / ATCC 700720) protein is Ribonucleoside-diphosphate reductase 2 subunit beta (nrdF).